Consider the following 308-residue polypeptide: GTPase IMAP family member 5 (308 aa).

Residues 1–283 are Cytoplasmic-facing; the sequence is MEHLQKSTYG…VKSCWSSHTA (283 aa). One can recognise an AIG1-type G domain in the interval 24–227; that stretch reads SSCLRILLVG…HSNDLFLHAE (204 aa). GTP-binding positions include 33-41, Ser-54, 151-153, and Asn-188; these read GKSGCGKSA and RKE. Residues 284–304 form a helical; Anchor for type IV membrane protein membrane-spanning segment; the sequence is ACALLIVLGLTLLTTFINLCI. Residues 305–308 lie on the Mitochondrial intermembrane side of the membrane; it reads SRCK.

This sequence belongs to the TRAFAC class TrmE-Era-EngA-EngB-Septin-like GTPase superfamily. AIG1/Toc34/Toc159-like paraseptin GTPase family. IAN subfamily. In terms of assembly, interacts with BAD, BAK1, BAX, BCL2, BCL2L1/Bcl-xL and BCL2L11/BimEL. The interaction with BAX is increased, when cells initiate apoptosis upon IL2 withdrawal. Forms a complex with BCL2L1 or MCL1 and HSPA8/HSC70; the interaction between HSPA8 and BCL2L1 or MCL1 is impaired in the absence of GIMAP5. May interact (via N-terminus) with microtubules. Expressed in thymus (in thymocytes), spleen (in splenocytes), lymph node and lung. Highly expressed in T lymphocytes. Expressed in B cells and in distinct lineages of hematopoietic bone marrow cells, including natural killer, B, T, myeloid and erythroid lineages. Expressed in liver endothelial cells.

It localises to the lysosome. It is found in the lysosome membrane. The protein resides in the endosome. Its subcellular location is the multivesicular body membrane. The protein localises to the endosome membrane. Plays a role in T lymphocyte development and the optimal generation of CD4/CD8 double-positive thymocytes. Inhibitor of GSK3A. May act by sequestering GSK3A in cytoplasmic vesicles and impairing its translocation to the nucleus. Consequently, impairs GSK3A-dependent transcriptional program and regulation of the DNA damage response occurring during T cells proliferation. Required for the survival of bone marrow hematopoietic stem cells, as well as of peripheral T cells, natural killer (NK) and NK T-cell development and the maintenance of normal liver function. May promote the survival of mature T lymphocytes upon cytokine withdrawal. May regulate Ca(2+) homeostasis by modulating lysosomal Ca(2+) stores, preventing its accumulation in the absence of T cell activation. May play a role in mitochondrial DNA segregation in hematopoietic tissues. Is a regulator of liver endothelial cell homeostasis. The polypeptide is GTPase IMAP family member 5 (Gimap5) (Mus musculus (Mouse)).